The primary structure comprises 184 residues: FMRFamide-like neuropeptides 3 (184 aa).

An N-terminal signal peptide occupies residues 1–23 (MISPNHLILLFCVNCAFLVASDA). Residues 24-25 (TP) constitute a propeptide that is removed on maturation. Phe35 carries the phenylalanine amide modification. Positions 39 to 73 (AIADEMTFEEDGYYPSNVMWKRSTVDSSEPVIRDQ) are excised as a propeptide. A phenylalanine amide mark is found at Phe82, Phe95, Phe111, and Phe126. The interval 90-110 (FGTMRFGKRNPENDTPFGTMR) is disordered. Residues 130-142 (EDGNAPFGTMKFG) constitute a propeptide that is removed on maturation. The interval 150–184 (LGTMRFGKRSADDSAPFGTMRFGKRNPLGTMRFGK) is disordered. Phenylalanine amide occurs at positions 155, 171, and 182.

Belongs to the FARP (FMRFamide related peptide) family. Each flp gene is expressed in a distinct set of neurons. Flp-3 is expressed in the IL1 and PQR neurons.

The protein localises to the secreted. Functionally, FMRFamides and FMRFamide-like peptides are neuropeptides. SAEPFGTMRF-amide inhibits the activity of dissected pharyngeal myogenic muscle system. The sequence is that of FMRFamide-like neuropeptides 3 from Caenorhabditis elegans.